The following is a 467-amino-acid chain: Replication factor C large subunit (467 aa).

ATP is bound at residue 47–54 (GPPGVGKT).

The protein belongs to the activator 1 small subunits family. RfcL subfamily. Heteromultimer composed of small subunits (RfcS) and large subunits (RfcL).

In terms of biological role, part of the RFC clamp loader complex which loads the PCNA sliding clamp onto DNA. The sequence is that of Replication factor C large subunit from Methanothrix thermoacetophila (strain DSM 6194 / JCM 14653 / NBRC 101360 / PT) (Methanosaeta thermophila).